A 378-amino-acid polypeptide reads, in one-letter code: Carbamoyl phosphate synthase small chain (378 aa).

The segment at 1 to 189 (MTKPAILALA…DSHPTIDAAD (189 aa)) is CPSase. The L-glutamine site is built by serine 47, glycine 241, and glycine 243. The 186-residue stretch at 193-378 (HVVAFDYGVK…RFTDAMAKRR (186 aa)) folds into the Glutamine amidotransferase type-1 domain. The active-site Nucleophile is cysteine 269. L-glutamine-binding residues include leucine 270, glutamine 273, asparagine 311, glycine 313, and phenylalanine 314. Residues histidine 353 and glutamate 355 contribute to the active site.

It belongs to the CarA family. As to quaternary structure, composed of two chains; the small (or glutamine) chain promotes the hydrolysis of glutamine to ammonia, which is used by the large (or ammonia) chain to synthesize carbamoyl phosphate. Tetramer of heterodimers (alpha,beta)4.

The enzyme catalyses hydrogencarbonate + L-glutamine + 2 ATP + H2O = carbamoyl phosphate + L-glutamate + 2 ADP + phosphate + 2 H(+). It carries out the reaction L-glutamine + H2O = L-glutamate + NH4(+). It participates in amino-acid biosynthesis; L-arginine biosynthesis; carbamoyl phosphate from bicarbonate: step 1/1. The protein operates within pyrimidine metabolism; UMP biosynthesis via de novo pathway; (S)-dihydroorotate from bicarbonate: step 1/3. Its function is as follows. Small subunit of the glutamine-dependent carbamoyl phosphate synthetase (CPSase). CPSase catalyzes the formation of carbamoyl phosphate from the ammonia moiety of glutamine, carbonate, and phosphate donated by ATP, constituting the first step of 2 biosynthetic pathways, one leading to arginine and/or urea and the other to pyrimidine nucleotides. The small subunit (glutamine amidotransferase) binds and cleaves glutamine to supply the large subunit with the substrate ammonia. This chain is Carbamoyl phosphate synthase small chain, found in Pseudomonas putida (strain ATCC 47054 / DSM 6125 / CFBP 8728 / NCIMB 11950 / KT2440).